We begin with the raw amino-acid sequence, 173 residues long: NADH-ubiquinone oxidoreductase chain 6 (173 aa).

The next 5 helical transmembrane spans lie at 1–21, 27–47, 48–68, 87–107, and 139–159; these read MTYF…AVAS, YGVV…LSLG, VSFV…VVFV, VVGY…VGGF, and CGVG…FVVL.

It belongs to the complex I subunit 6 family.

It localises to the mitochondrion membrane. The catalysed reaction is a ubiquinone + NADH + 5 H(+)(in) = a ubiquinol + NAD(+) + 4 H(+)(out). Its function is as follows. Core subunit of the mitochondrial membrane respiratory chain NADH dehydrogenase (Complex I) that is believed to belong to the minimal assembly required for catalysis. Complex I functions in the transfer of electrons from NADH to the respiratory chain. The immediate electron acceptor for the enzyme is believed to be ubiquinone. The chain is NADH-ubiquinone oxidoreductase chain 6 (MT-ND6) from Aethia cristatella (Crested auklet).